The chain runs to 470 residues: UDP-N-acetylmuramoylalanine--D-glutamate ligase (470 aa).

Residue 124–130 (GTNGKTT) participates in ATP binding.

Belongs to the MurCDEF family.

It is found in the cytoplasm. It carries out the reaction UDP-N-acetyl-alpha-D-muramoyl-L-alanine + D-glutamate + ATP = UDP-N-acetyl-alpha-D-muramoyl-L-alanyl-D-glutamate + ADP + phosphate + H(+). The protein operates within cell wall biogenesis; peptidoglycan biosynthesis. In terms of biological role, cell wall formation. Catalyzes the addition of glutamate to the nucleotide precursor UDP-N-acetylmuramoyl-L-alanine (UMA). This Prochlorococcus marinus (strain SARG / CCMP1375 / SS120) protein is UDP-N-acetylmuramoylalanine--D-glutamate ligase.